Consider the following 103-residue polypeptide: Nucleoid-associated protein A2cp1_3777 (103 aa).

This sequence belongs to the YbaB/EbfC family. Homodimer.

It localises to the cytoplasm. The protein localises to the nucleoid. In terms of biological role, binds to DNA and alters its conformation. May be involved in regulation of gene expression, nucleoid organization and DNA protection. This Anaeromyxobacter dehalogenans (strain 2CP-1 / ATCC BAA-258) protein is Nucleoid-associated protein A2cp1_3777.